Reading from the N-terminus, the 552-residue chain is Polypyrimidine tract-binding protein 3 (552 aa).

An N-acetylmethionine modification is found at Met-1. Ser-17 carries the post-translational modification Phosphoserine. The span at 32-43 shows a compositional bias: polar residues; the sequence is MNSSTPSTANGN. Residues 32 to 55 form a disordered region; sequence MNSSTPSTANGNDSKKFKRDRPPC. 3 consecutive RRM domains span residues 59-143, 182-258, and 358-432; these read RVLH…NLPN, LRII…FSKL, and SVLL…LSKH. Residue Lys-65 forms a Glycyl lysine isopeptide (Lys-Gly) (interchain with G-Cter in SUMO2) linkage. At Tyr-127 the chain carries Phosphotyrosine. Phosphothreonine is present on Thr-138. Lys-216 participates in a covalent cross-link: Glycyl lysine isopeptide (Lys-Gly) (interchain with G-Cter in SUMO2). The residue at position 423 (Lys-423) is an N6-acetyllysine. The segment at 435–455 is disordered; that stretch reads VQLPREGQEDQGLTKDFSNSP. Ser-454 is modified (phosphoserine). Residues 475–550 enclose the RRM 4 domain; the sequence is ATLHLSNIPP…HHLRVSFSKS (76 aa).

In terms of assembly, interacts with THBS4 (via the acidic amphipathic C-terminus). As to expression, expressed in several hematopoietic cell lines examined.

Functionally, RNA-binding protein that mediates pre-mRNA alternative splicing regulation. Plays a role in the regulation of cell proliferation, differentiation and migration. Positive regulator of EPO-dependent erythropoiesis. Participates in cell differentiation regulation by repressing tissue-specific exons. Promotes FAS exon 6 skipping. Binds RNA, preferentially to both poly(G) and poly(U). This chain is Polypyrimidine tract-binding protein 3 (PTBP3), found in Homo sapiens (Human).